Here is a 367-residue protein sequence, read N- to C-terminus: Glutamate 5-kinase (367 aa).

Position 10 (lysine 10) interacts with ATP. 3 residues coordinate substrate: serine 50, aspartate 137, and asparagine 149. Residue threonine 169–aspartate 170 coordinates ATP. In terms of domain architecture, PUA spans alanine 275–glutamate 353.

It belongs to the glutamate 5-kinase family.

It is found in the cytoplasm. The catalysed reaction is L-glutamate + ATP = L-glutamyl 5-phosphate + ADP. It functions in the pathway amino-acid biosynthesis; L-proline biosynthesis; L-glutamate 5-semialdehyde from L-glutamate: step 1/2. Its function is as follows. Catalyzes the transfer of a phosphate group to glutamate to form L-glutamate 5-phosphate. The polypeptide is Glutamate 5-kinase (Salmonella paratyphi B (strain ATCC BAA-1250 / SPB7)).